Consider the following 358-residue polypeptide: Dihydroorotate dehydrogenase (quinone) (358 aa).

FMN contacts are provided by residues 61–65 (AGFDK) and G85. K65 contributes to the substrate binding site. Substrate is bound at residue 110–114 (NRFGL). N139 and N170 together coordinate FMN. N170 contacts substrate. S173 serves as the catalytic Nucleophile. A substrate-binding site is contributed by N175. Residues K211 and S239 each contribute to the FMN site. 240–241 (NT) lines the substrate pocket. FMN contacts are provided by residues G263, G292, and 313–314 (YS).

Belongs to the dihydroorotate dehydrogenase family. Type 2 subfamily. In terms of assembly, monomer. FMN is required as a cofactor.

It localises to the cell membrane. The catalysed reaction is (S)-dihydroorotate + a quinone = orotate + a quinol. It functions in the pathway pyrimidine metabolism; UMP biosynthesis via de novo pathway; orotate from (S)-dihydroorotate (quinone route): step 1/1. In terms of biological role, catalyzes the conversion of dihydroorotate to orotate with quinone as electron acceptor. This Methylorubrum extorquens (strain CM4 / NCIMB 13688) (Methylobacterium extorquens) protein is Dihydroorotate dehydrogenase (quinone).